A 155-amino-acid chain; its full sequence is Aspartate carbamoyltransferase regulatory chain (155 aa).

4 residues coordinate Zn(2+): cysteine 113, cysteine 118, cysteine 139, and cysteine 142.

The protein belongs to the PyrI family. As to quaternary structure, contains catalytic and regulatory chains. Zn(2+) serves as cofactor.

Functionally, involved in allosteric regulation of aspartate carbamoyltransferase. This Methanosphaerula palustris (strain ATCC BAA-1556 / DSM 19958 / E1-9c) protein is Aspartate carbamoyltransferase regulatory chain.